Here is a 427-residue protein sequence, read N- to C-terminus: Glutamate-1-semialdehyde 2,1-aminomutase (427 aa).

Position 265 is an N6-(pyridoxal phosphate)lysine (Lys265).

The protein belongs to the class-III pyridoxal-phosphate-dependent aminotransferase family. HemL subfamily. As to quaternary structure, homodimer. Pyridoxal 5'-phosphate is required as a cofactor.

Its subcellular location is the cytoplasm. The catalysed reaction is (S)-4-amino-5-oxopentanoate = 5-aminolevulinate. The protein operates within porphyrin-containing compound metabolism; protoporphyrin-IX biosynthesis; 5-aminolevulinate from L-glutamyl-tRNA(Glu): step 2/2. This Pasteurella multocida (strain Pm70) protein is Glutamate-1-semialdehyde 2,1-aminomutase.